The following is a 544-amino-acid chain: Dihydrolipoyllysine-residue acetyltransferase component of pyruvate dehydrogenase complex (544 aa).

Lipoyl-binding domains are found at residues 1-76 and 113-188; these read MYEF…VTID and IYDF…VLIG. Lys42 and Lys154 each carry N6-lipoyllysine. A Peripheral subunit-binding (PSBD) domain is found at 242–279; that stretch reads LASPVARKLASDLGVDIATIKGSGEQGRVMKDDVQNSK. Residue His516 is part of the active site.

This sequence belongs to the 2-oxoacid dehydrogenase family. In terms of assembly, forms a 24-polypeptide structural core with octahedral symmetry. The cofactor is (R)-lipoate.

The enzyme catalyses N(6)-[(R)-dihydrolipoyl]-L-lysyl-[protein] + acetyl-CoA = N(6)-[(R)-S(8)-acetyldihydrolipoyl]-L-lysyl-[protein] + CoA. Functionally, the pyruvate dehydrogenase complex catalyzes the overall conversion of pyruvate to acetyl-CoA and CO(2). It contains multiple copies of three enzymatic components: pyruvate dehydrogenase (E1), dihydrolipoamide acetyltransferase (E2) and lipoamide dehydrogenase (E3). The polypeptide is Dihydrolipoyllysine-residue acetyltransferase component of pyruvate dehydrogenase complex (pdhC) (Acholeplasma laidlawii).